Here is a 142-residue protein sequence, read N- to C-terminus: Small ribosomal subunit protein uS12 (142 aa).

Residues 1-30 form a disordered region; that stretch reads MGKTRGMGAARKLKNHRRRQRWADKSYKKS. The segment covering 11-20 has biased composition (basic residues); that stretch reads RKLKNHRRRQ. Positions 21-30 are enriched in basic and acidic residues; that stretch reads RWADKSYKKS. P61 bears the Hydroxyproline mark.

This sequence belongs to the universal ribosomal protein uS12 family.

In Fragaria ananassa (Strawberry), this protein is Small ribosomal subunit protein uS12 (RPS23).